Consider the following 377-residue polypeptide: MEALLLGAGLLLGAYVLVYYNLVKAPPCGGMGNLRGRTAVVTGANSGIGKMTALELARRGARVVLACRSQERGEAAAFDLRQESGNNEVIFMALDLASLASVRAFATAFLSSEPRLDILIHNAGISSCGRTREAFNLLLRVNHIGPFLLTHLLLPCLKACAPSRVVVVASAAHCRGRLDFKRLDRPVVGWRQELRAYADTKLANVLFARELANQLEATGVTCYAAHPGPVNSELFLRHVPGWLRPLLRPLAWLVLRAPRGGAQTPLYCALQEGIEPLSGRYFANCHVEEVPPAARDDRAAHRLWEASKRLAGLGPGEDAEPDEDPQSEDSEAPSSLSTPHPEEPTVSQPYPSPQSSPDLSKMTHRIQAKVEPEIQLS.

A signal peptide spans 1–25 (MEALLLGAGLLLGAYVLVYYNLVKA). The NAD(+) site is built by Ser-46 and Ile-48. Ser-170 contacts substrate. Residues Tyr-197, Lys-201, and Ser-232 each contribute to the NAD(+) site. The active-site Proton acceptor is Tyr-197. The interval 309–377 (RLAGLGPGED…AKVEPEIQLS (69 aa)) is disordered. Over residues 317-331 (EDAEPDEDPQSEDSE) the composition is skewed to acidic residues. The segment covering 347–357 (SQPYPSPQSSP) has biased composition (low complexity). The segment covering 368–377 (AKVEPEIQLS) has biased composition (basic and acidic residues).

The protein belongs to the short-chain dehydrogenases/reductases (SDR) family.

Its subcellular location is the secreted. Functionally, putative oxidoreductase. The sequence is that of Dehydrogenase/reductase SDR family member 13 from Homo sapiens (Human).